We begin with the raw amino-acid sequence, 223 residues long: Killer cell lectin-like receptor subfamily B member 1B allele A (223 aa).

Topologically, residues 1–43 (MDSTTLVYADLNLARIQEPKHDSPPSLSPDTCRCPRWHRLALK) are cytoplasmic. Positions 6 to 11 (LVYADL) match the ITIM motif motif. Residues 32-35 (CRCP) carry the LCK-binding motif motif. A helical; Signal-anchor for type II membrane protein membrane pass occupies residues 44 to 63 (FGCAGLILLVLVVIGLCVLV). The Extracellular segment spans residues 64–223 (LSVQKSSVQK…LNHETPSNDS (160 aa)). A C-type lectin domain is found at 93 to 212 (ECPQDWLSHR…STDNRWICQK (120 aa)). Cystine bridges form between Cys-122–Cys-210 and Cys-189–Cys-202.

In terms of assembly, homodimer; disulfide-linked. Interacts with tyrosine kinase LCK. Binds PTPN6/SHP-1 in a phosphorylation-dependent manner. Expressed in NK cells and a subset of T-cells.

It localises to the membrane. Receptor for CLEC2D/OCIL. Ligand-binding contributes to inhibition of cytotoxic natural killer (NK) cells. May mediate MHC class I-independent 'missing-self' recognition of allografts, tumor cells and virus-infected cells. The chain is Killer cell lectin-like receptor subfamily B member 1B allele A (Klrb1b) from Mus musculus (Mouse).